The primary structure comprises 125 residues: Phosphoribosyl-AMP cyclohydrolase (125 aa).

Aspartate 74 contributes to the Mg(2+) binding site. Residue cysteine 75 participates in Zn(2+) binding. Aspartate 76 and aspartate 78 together coordinate Mg(2+). The Zn(2+) site is built by cysteine 92 and cysteine 99.

The protein belongs to the PRA-CH family. As to quaternary structure, homodimer. The cofactor is Mg(2+). Zn(2+) serves as cofactor.

The protein resides in the cytoplasm. It catalyses the reaction 1-(5-phospho-beta-D-ribosyl)-5'-AMP + H2O = 1-(5-phospho-beta-D-ribosyl)-5-[(5-phospho-beta-D-ribosylamino)methylideneamino]imidazole-4-carboxamide. It functions in the pathway amino-acid biosynthesis; L-histidine biosynthesis; L-histidine from 5-phospho-alpha-D-ribose 1-diphosphate: step 3/9. Functionally, catalyzes the hydrolysis of the adenine ring of phosphoribosyl-AMP. In Geobacter metallireducens (strain ATCC 53774 / DSM 7210 / GS-15), this protein is Phosphoribosyl-AMP cyclohydrolase.